Reading from the N-terminus, the 282-residue chain is Glucuronoxylan 4-O-methyltransferase 1 (282 aa).

The chain crosses the membrane as a helical span at residues 13-33; sequence VLLVFLLATLILIFIVRSTLT.

This sequence belongs to the methyltransferase superfamily. As to expression, expressed in rosette leaves, stems, flowers and siliques.

It localises to the golgi apparatus membrane. The catalysed reaction is glucuronoxylan D-glucuronate + n S-adenosyl-L-methionine = glucuronoxylan 4-O-methyl-D-glucuronate + n S-adenosyl-L-homocysteine + n H(+). Functionally, methyltransferase catalyzing 4-O-methylation of glucuronic acid side chains on xylan. The chain is Glucuronoxylan 4-O-methyltransferase 1 (GXM1) from Arabidopsis thaliana (Mouse-ear cress).